The sequence spans 203 residues: MKVENHNLAVASLKTQRISAFKARLVAVLLKGKKVSDALAILAHTKKKASPIFTKLINSAVANAINNHGFEHSNLIIKAAIVNEGPTLKRFRPRAKGAASQILKRTSHFKVILASQNGGESQNQEYQEAEKNLVSKSPENTQSGALSQQIRGEQPQNDPENGVDSQLSAKTNSTTTAKKTDLADNNTKNDATNTVLAQEKEVK.

2 stretches are compositionally biased toward polar residues: residues 116–126 and 134–167; these read QNGGESQNQEY and VSKSPENTQSGALSQQIRGEQPQNDPENGVDSQL. The segment at 116–203 is disordered; sequence QNGGESQNQE…TVLAQEKEVK (88 aa). Residues 168–194 are compositionally biased toward low complexity; that stretch reads SAKTNSTTTAKKTDLADNNTKNDATNT.

This sequence belongs to the universal ribosomal protein uL22 family. Part of the 50S ribosomal subunit.

Its function is as follows. This protein binds specifically to 23S rRNA; its binding is stimulated by other ribosomal proteins, e.g. L4, L17, and L20. It is important during the early stages of 50S assembly. It makes multiple contacts with different domains of the 23S rRNA in the assembled 50S subunit and ribosome. In terms of biological role, the globular domain of the protein is located near the polypeptide exit tunnel on the outside of the subunit, while an extended beta-hairpin is found that lines the wall of the exit tunnel in the center of the 70S ribosome. This chain is Large ribosomal subunit protein uL22, found in Mesomycoplasma hyopneumoniae (strain 232) (Mycoplasma hyopneumoniae).